A 389-amino-acid chain; its full sequence is MVSVAEIRKAQRAEGPATILAIGTANPPNRVEQATYPDFYFKITNSEHKVELKEKFQRMCDKSMIKSRYMYLTEEILKENPSVCEYMAPSLDARQDMVVVEVPRLGKEAAVKAIKEWGQPKSKITHLIFCTTSGVDMPGADYQLTKLLGLRPYVKRYMMYQQGCFAGGTVLRLAKDLAENNKGARVLVVCSEVTAVTFRGPSDTHLDSLVGQALFGDGAAALIVGSDPVPEIEKPIFEMVWTAQTIAPDSEGAIDGHLREAGLTFHLLKDVPGIVSKNIDKALVEAFQPLNISDYNSIFWIAHPGGPAILDQVEQKLSLKPEKMKATRDVLSEYGNMSSACVLFILDEMRKKSAQDGLKTTGEGLEWGVLFGFGPGLTIETVVLHSVAI.

Residue Cys-164 is part of the active site.

It belongs to the thiolase-like superfamily. Chalcone/stilbene synthases family.

It catalyses the reaction (E)-4-coumaroyl-CoA + 3 malonyl-CoA + 3 H(+) = 2',4,4',6'-tetrahydroxychalcone + 3 CO2 + 4 CoA. The protein operates within secondary metabolite biosynthesis; flavonoid biosynthesis. Functionally, the primary product of this enzyme is 4,2',4',6'-tetrahydroxychalcone (also termed naringenin-chalcone or chalcone) which can under specific conditions spontaneously isomerize into naringenin. The protein is Chalcone synthase 1 (CHS1) of Trifolium subterraneum (Subterranean clover).